Here is a 486-residue protein sequence, read N- to C-terminus: Cardiolipin synthase A (486 aa).

Helical transmembrane passes span 3 to 23 (TFYT…IAGV) and 38 to 58 (MAWL…YLSV). 2 PLD phosphodiesterase domains span residues 219 to 246 (MDLR…VDPR) and 399 to 426 (EGGL…DMRS). Residues His224, Lys226, Asp231, His404, Lys406, and Asp411 contribute to the active site.

It belongs to the phospholipase D family. Cardiolipin synthase subfamily. ClsA sub-subfamily.

The protein resides in the cell inner membrane. It carries out the reaction 2 a 1,2-diacyl-sn-glycero-3-phospho-(1'-sn-glycerol) = a cardiolipin + glycerol. Catalyzes the reversible phosphatidyl group transfer from one phosphatidylglycerol molecule to another to form cardiolipin (CL) (diphosphatidylglycerol) and glycerol. In Salmonella paratyphi A (strain ATCC 9150 / SARB42), this protein is Cardiolipin synthase A.